The following is a 426-amino-acid chain: Serine hydroxymethyltransferase (426 aa).

(6S)-5,6,7,8-tetrahydrofolate contacts are provided by residues Leu118 and 122 to 124; that span reads GHL. Lys227 is subject to N6-(pyridoxal phosphate)lysine. The segment at 342–368 is disordered; that stretch reads NTIPNDPKPPTQASGIRLGTPAMTTRG.

It belongs to the SHMT family. Homodimer. Requires pyridoxal 5'-phosphate as cofactor.

It localises to the cytoplasm. The catalysed reaction is (6R)-5,10-methylene-5,6,7,8-tetrahydrofolate + glycine + H2O = (6S)-5,6,7,8-tetrahydrofolate + L-serine. It functions in the pathway one-carbon metabolism; tetrahydrofolate interconversion. It participates in amino-acid biosynthesis; glycine biosynthesis; glycine from L-serine: step 1/1. Catalyzes the reversible interconversion of serine and glycine with tetrahydrofolate (THF) serving as the one-carbon carrier. This reaction serves as the major source of one-carbon groups required for the biosynthesis of purines, thymidylate, methionine, and other important biomolecules. Also exhibits THF-independent aldolase activity toward beta-hydroxyamino acids, producing glycine and aldehydes, via a retro-aldol mechanism. This chain is Serine hydroxymethyltransferase, found in Thermomicrobium roseum (strain ATCC 27502 / DSM 5159 / P-2).